A 292-amino-acid polypeptide reads, in one-letter code: Phosphoribosylaminoimidazole-succinocarboxamide synthase (292 aa).

It belongs to the SAICAR synthetase family.

It catalyses the reaction 5-amino-1-(5-phospho-D-ribosyl)imidazole-4-carboxylate + L-aspartate + ATP = (2S)-2-[5-amino-1-(5-phospho-beta-D-ribosyl)imidazole-4-carboxamido]succinate + ADP + phosphate + 2 H(+). Its pathway is purine metabolism; IMP biosynthesis via de novo pathway; 5-amino-1-(5-phospho-D-ribosyl)imidazole-4-carboxamide from 5-amino-1-(5-phospho-D-ribosyl)imidazole-4-carboxylate: step 1/2. The polypeptide is Phosphoribosylaminoimidazole-succinocarboxamide synthase (Thermodesulfovibrio yellowstonii (strain ATCC 51303 / DSM 11347 / YP87)).